The sequence spans 579 residues: CTP synthase (579 aa).

Residues 1–281 (MPALRKHPQT…DAYVVRRLNL (281 aa)) are amidoligase domain. CTP is bound at residue serine 23. Position 23 (serine 23) interacts with UTP. ATP is bound by residues 24–29 (SLGKGL) and aspartate 81. Positions 81 and 155 each coordinate Mg(2+). Residues 162 to 164 (DIE), 202 to 207 (KTKPTQ), and lysine 238 contribute to the CTP site. UTP-binding positions include 202–207 (KTKPTQ) and lysine 238. One can recognise a Glutamine amidotransferase type-1 domain in the interval 306 to 554 (RIALVGKYID…IGAALDYKAA (249 aa)). Glycine 369 is a binding site for L-glutamine. The active-site Nucleophile; for glutamine hydrolysis is cysteine 396. L-glutamine contacts are provided by residues 397-400 (LGLQ), glutamate 419, and arginine 480. Catalysis depends on residues histidine 527 and glutamate 529.

Belongs to the CTP synthase family. In terms of assembly, homotetramer.

The enzyme catalyses UTP + L-glutamine + ATP + H2O = CTP + L-glutamate + ADP + phosphate + 2 H(+). The catalysed reaction is L-glutamine + H2O = L-glutamate + NH4(+). It carries out the reaction UTP + NH4(+) + ATP = CTP + ADP + phosphate + 2 H(+). Its pathway is pyrimidine metabolism; CTP biosynthesis via de novo pathway; CTP from UDP: step 2/2. Its activity is regulated as follows. Allosterically activated by GTP, when glutamine is the substrate; GTP has no effect on the reaction when ammonia is the substrate. The allosteric effector GTP functions by stabilizing the protein conformation that binds the tetrahedral intermediate(s) formed during glutamine hydrolysis. Inhibited by the product CTP, via allosteric rather than competitive inhibition. Its function is as follows. Catalyzes the ATP-dependent amination of UTP to CTP with either L-glutamine or ammonia as the source of nitrogen. Regulates intracellular CTP levels through interactions with the four ribonucleotide triphosphates. The polypeptide is CTP synthase (Mycobacterium sp. (strain KMS)).